A 966-amino-acid chain; its full sequence is Envelope glycoprotein (966 aa).

The first 83 residues, 1-83 (MDAGARYMRL…LLGINMCVSA (83 aa)), serve as a signal peptide directing secretion. Residues 84–801 (EDYITLISDP…SLKDVFDWSG (718 aa)) lie on the Extracellular side of the membrane. N-linked (GlcNAc...) asparagine; by host glycans are attached at residues N101, N134, N179, N220, N231, N334, N351, N357, N382, N403, N407, N438, N443, N449, N459, N469, N483, N495, N505, N511, N529, and N536. Positions 633–653 (GVGLVIMLVIMAIVAAAGASL) are fusion peptide. Coiled coils occupy residues 665-715 (KAAV…RIML) and 756-791 (RGLQGYDTNLTILLKESAAMTQLAEEQARRIPEVWE). Positions 699-715 (LEARVARVEAITDRIML) are immunosuppression. Residues 802-822 (WFSWLKYIPIIVVGLLGCILI) traverse the membrane as a helical segment. The Cytoplasmic portion of the chain corresponds to 823–966 (RAVICVCQPL…LWCYKKSKSL (144 aa)).

The mature envelope protein (Env) consists of a trimer of SU-TM heterodimers attached by noncovalent interactions or by a labile interchain disulfide bond. In terms of processing, specific enzymatic cleavages in vivo yield mature proteins. Envelope glycoproteins are synthesized as an inactive precursor that is N-glycosylated and processed likely by host cell furin or by a furin-like protease in the Golgi to yield the mature SU and TM proteins. The cleavage site between SU and TM requires the minimal sequence [KR]-X-[KR]-R.

Its subcellular location is the virion membrane. The protein resides in the host cell membrane. The surface protein (SU) attaches the virus to the host cell by binding to its receptor. This interaction triggers the refolding of the transmembrane protein (TM) and is thought to activate its fusogenic potential by unmasking its fusion peptide. Fusion occurs at the host cell plasma membrane. In terms of biological role, the transmembrane protein (TM) acts as a class I viral fusion protein. Under the current model, the protein has at least 3 conformational states: pre-fusion native state, pre-hairpin intermediate state, and post-fusion hairpin state. During viral and target cell membrane fusion, the coiled coil regions (heptad repeats) assume a trimer-of-hairpins structure, positioning the fusion peptide in close proximity to the C-terminal region of the ectodomain. The formation of this structure appears to drive apposition and subsequent fusion of viral and target cell membranes. Membranes fusion leads to delivery of the nucleocapsid into the cytoplasm. This Caprine arthritis encephalitis virus (strain Cork) (CAEV-Co) protein is Envelope glycoprotein (env).